The chain runs to 632 residues: Phosphatidylinositol-3,5-bisphosphate 3-phosphatase MTMR8 (632 aa).

Residues 126-500 (GWELISVVND…LHFKFWCGMY (375 aa)) form the Myotubularin phosphatase domain. The a 1,2-diacyl-sn-glycero-3-phospho-(1D-myo-inositol-3,5-bisphosphate) site is built by Asn-250, Asn-275, and Ile-276. 3 residues coordinate a 1,2-diacyl-sn-glycero-3-phospho-(1D-myo-inositol-3-phosphate): Asn-250, Asn-275, and Ile-276. The active-site Phosphocysteine intermediate is Cys-338. Ser-339, Asp-340, Gly-341, Trp-342, Asp-343, Arg-344, Lys-380, and Arg-384 together coordinate a 1,2-diacyl-sn-glycero-3-phospho-(1D-myo-inositol-3,5-bisphosphate). Residues Ser-339, Asp-340, Gly-341, Trp-342, Asp-343, and Arg-344 each coordinate a 1,2-diacyl-sn-glycero-3-phospho-(1D-myo-inositol-3-phosphate). Positions 339 and 340 each coordinate phosphate. Residues Trp-342, Asp-343, and Arg-344 each coordinate phosphate. A 1,2-diacyl-sn-glycero-3-phospho-(1D-myo-inositol-3-phosphate) is bound at residue Arg-384. A disordered region spans residues 545-632 (LPDPAGPINT…HSKEEVQESS (88 aa)). Residues 602–632 (EPAANEHDLSSKDKPVFVETEHSKEEVQESS) are compositionally biased toward basic and acidic residues.

Belongs to the protein-tyrosine phosphatase family. Non-receptor class myotubularin subfamily. In terms of assembly, homodimer.

It localises to the nucleus envelope. It carries out the reaction a 1,2-diacyl-sn-glycero-3-phospho-(1D-myo-inositol-3,5-bisphosphate) + H2O = a 1,2-diacyl-sn-glycero-3-phospho-(1D-myo-inositol-5-phosphate) + phosphate. It catalyses the reaction a 1,2-diacyl-sn-glycero-3-phospho-(1D-myo-inositol-3-phosphate) + H2O = a 1,2-diacyl-sn-glycero-3-phospho-(1D-myo-inositol) + phosphate. The catalysed reaction is 1,2-dioctanoyl-sn-glycero-3-phospho-(1D-myo-inositol-3,5-bisphosphate) + H2O = 1,2-dioctanoyl-sn-glycero-3-phospho-(1D-myo-inositol-5-phosphate) + phosphate. In terms of biological role, lipid phosphatase that specifically dephosphorylates the D-3 position of phosphatidylinositol 3-phosphate and phosphatidylinositol 3,5-bisphosphate, generating phosphatidylinositol and phosphatidylinositol 5-phosphate. This is Phosphatidylinositol-3,5-bisphosphate 3-phosphatase MTMR8 (mtmr8) from Danio rerio (Zebrafish).